The primary structure comprises 242 residues: Uridylate kinase (242 aa).

12–15 (KLSG) lines the ATP pocket. The interval 20–25 (GEKGYG) is involved in allosteric activation by GTP. Glycine 55 serves as a coordination point for UMP. The ATP site is built by glycine 56 and arginine 60. UMP-binding positions include aspartate 75 and 136–143 (TGNPYFST). ATP contacts are provided by tyrosine 169 and aspartate 172.

Belongs to the UMP kinase family. In terms of assembly, homohexamer.

Its subcellular location is the cytoplasm. The enzyme catalyses UMP + ATP = UDP + ADP. The protein operates within pyrimidine metabolism; CTP biosynthesis via de novo pathway; UDP from UMP (UMPK route): step 1/1. With respect to regulation, allosterically activated by GTP. Inhibited by UTP. In terms of biological role, catalyzes the reversible phosphorylation of UMP to UDP. This chain is Uridylate kinase, found in Carboxydothermus hydrogenoformans (strain ATCC BAA-161 / DSM 6008 / Z-2901).